Reading from the N-terminus, the 271-residue chain is Protein FAM110D (271 aa).

Polar residues predominate over residues Met1–Arg13. 3 disordered regions span residues Met1–Leu84, Asp118–Arg149, and Pro186–Thr242.

It belongs to the FAM110 family.

The protein is Protein FAM110D of Mus musculus (Mouse).